Here is a 748-residue protein sequence, read N- to C-terminus: CCR4-NOT transcription complex subunit 10-B (748 aa).

Residues Met-1–Gly-16 are compositionally biased toward basic and acidic residues. 3 disordered regions span residues Met-1–Asp-25, Lys-483–Ser-524, and Val-605–Pro-634. Polar residues-rich tracts occupy residues Gly-487 to Asn-509 and Val-605 to Glu-615.

Belongs to the CNOT10 family. Component of the CCR4-NOT complex. cnot10 and cnot11 form a subcomplex docked to the cnot1 scaffold.

The protein resides in the cytoplasm. It localises to the nucleus. In terms of biological role, component of the CCR4-NOT complex which is one of the major cellular mRNA deadenylases and is linked to various cellular processes including bulk mRNA degradation, miRNA-mediated repression, translational repression during translational initiation and general transcription regulation. Additional complex functions may be a consequence of its influence on mRNA expression. Is not required for association of CNOT7 to the CCR4-NOT complex. The chain is CCR4-NOT transcription complex subunit 10-B (cnot10-b) from Xenopus laevis (African clawed frog).